Reading from the N-terminus, the 548-residue chain is Leucine-rich repeat LGI family member 3 (548 aa).

The first 30 residues, 1 to 30 (MAGLRARRGPGRRLLVLSTLGFCLMLQVSA), serve as a signal peptide directing secretion. Residues 31–64 (KRPPKTPPCPPSCSCTRDTAFCVDSKSVPKNLPS) form the LRRNT domain. LRR repeat units lie at residues 89–110 (LLQF…AFIG), 113–134 (HLQY…TFRG), and 137–158 (SLTH…IFRP). The LRRCT domain maps to 170–220 (NALNCDCKVKWLVEWLAHTNTTVAPIYCASPPRFQEHKVQDLPLREFDCIT). Residue asparagine 189 is glycosylated (N-linked (GlcNAc...) asparagine). 2 EAR repeats span residues 222–264 (DFVL…KWDY) and 268–310 (QLRD…HWDP). Asparagine 311 carries an N-linked (GlcNAc...) asparagine glycan. 5 EAR repeats span residues 314–361 (RFTK…RWHQ), 363–406 (GFYS…QWSR), 410–453 (QFVA…RWEG), 455–497 (RFSE…QWDE), and 501–543 (KFVR…RHVV).

As to quaternary structure, interacts with STX1A. Brain.

Its subcellular location is the secreted. It is found in the cytoplasmic vesicle. It localises to the secretory vesicle. The protein resides in the synaptic vesicle. The protein localises to the synapse. Its subcellular location is the synaptosome. It is found in the cell projection. It localises to the axon. Its function is as follows. May participate in the regulation of neuronal exocytosis. The protein is Leucine-rich repeat LGI family member 3 (Lgi3) of Mus musculus (Mouse).